The chain runs to 253 residues: MEFSGSPMALFCCVFFLFLTGSLAQGIGSIVTSDLFNEMLKNRNDGRCPANGFYTYDAFIAAANSFPGFGTTGDDTARRKEIAAFFGQTSHETTGGSLSAEPFTGGYCFVRQNDQSDRYYGRGPIQLTNRNNYEKAGTAIGQELVNNPDLVATDATISFKTAIWFWMTPQDNKPSSHDVIIGRWTPSAADQAANRVPGYGVITNIINGGIECGIGRNDAVEDRIGYYRRYCGMLNVAPGENLDCYNQRNFGQG.

The signal sequence occupies residues 1-24; that stretch reads MEFSGSPMALFCCVFFLFLTGSLA. Glu92 serves as the catalytic Proton donor. Cysteines 212 and 244 form a disulfide.

It belongs to the glycosyl hydrolase 19 family. Chitinase class I subfamily.

The protein resides in the secreted. It catalyses the reaction Random endo-hydrolysis of N-acetyl-beta-D-glucosaminide (1-&gt;4)-beta-linkages in chitin and chitodextrins.. Its function is as follows. Defense against chitin-containing fungal pathogens. This is Acidic endochitinase Q from Nicotiana tabacum (Common tobacco).